Reading from the N-terminus, the 860-residue chain is Leucine--tRNA ligase (860 aa).

A 'HIGH' region motif is present at residues 42–52; sequence PYPSGRLHMGH. The short motif at 619–623 is the 'KMSKS' region element; it reads KMSKS. Lysine 622 contributes to the ATP binding site.

It belongs to the class-I aminoacyl-tRNA synthetase family.

It is found in the cytoplasm. It carries out the reaction tRNA(Leu) + L-leucine + ATP = L-leucyl-tRNA(Leu) + AMP + diphosphate. The polypeptide is Leucine--tRNA ligase (Salmonella enteritidis PT4 (strain P125109)).